A 37-amino-acid chain; its full sequence is Large ribosomal subunit protein bL36c (37 aa).

This sequence belongs to the bacterial ribosomal protein bL36 family.

It localises to the plastid. Its subcellular location is the chloroplast. The polypeptide is Large ribosomal subunit protein bL36c (Chara vulgaris (Common stonewort)).